We begin with the raw amino-acid sequence, 380 residues long: Probable inactive reductase easA (380 aa).

FMN-binding positions include 25-27 (PMT), A60, Q102, and H171. The substrate site is built by H171 and N174. FMN contacts are provided by residues K223, G299, 324 to 325 (GR), and R325. Y352 serves as a coordination point for substrate.

It belongs to the NADH:flavin oxidoreductase/NADH oxidase family.

In terms of biological role, probable inactive dehydrogenase; part of the gene cluster that mediates the biosynthesis of fungal ergot alkaloid ergovaline, the predominant ergopeptine product in E.festucae var. lolii. DmaW catalyzes the first step of ergot alkaloid biosynthesis by condensing dimethylallyl diphosphate (DMAP) and tryptophan to form 4-dimethylallyl-L-tryptophan. The second step is catalyzed by the methyltransferase easF that methylates 4-dimethylallyl-L-tryptophan in the presence of S-adenosyl-L-methionine, resulting in the formation of 4-dimethylallyl-L-abrine. The catalase easC and the FAD-dependent oxidoreductase easE then transform 4-dimethylallyl-L-abrine to chanoclavine-I which is further oxidized by easD in the presence of NAD(+), resulting in the formation of chanoclavine-I aldehyde. Agroclavine dehydrogenase easG then mediates the conversion of chanoclavine-I aldehyde to agroclavine via a non-enzymatic adduct reaction: the substrate is an iminium intermediate that is formed spontaneously from chanoclavine-I aldehyde in the presence of glutathione. The presence of easA is not required to complete this reaction. Further conversion of agroclavine to paspalic acid is a two-step process involving oxidation of agroclavine to elymoclavine and of elymoclavine to paspalic acid, the second step being performed by the elymoclavine oxidase cloA. Paspalic acid is then further converted to D-lysergic acid. Ergovaline is assembled from D-lysergic acid and three different amino acids by the D-lysergyl-peptide-synthetase composed of a monomudular (lpsB) and a trimodular (lpsA) nonribosomal peptide synthetase subunit. The sequence is that of Probable inactive reductase easA from Epichloe festucae var. lolii (Neotyphodium lolii).